We begin with the raw amino-acid sequence, 1175 residues long: DNA-directed RNA polymerase subunit beta (1175 aa).

Positions 1 to 24 (MEGSLLVASSASNNETANNVESTD) are disordered. Positions 7–23 (VASSASNNETANNVEST) are enriched in low complexity.

This sequence belongs to the RNA polymerase beta chain family. In terms of assembly, the RNAP catalytic core consists of 2 alpha, 1 beta, 1 beta' and 1 omega subunit. When a sigma factor is associated with the core the holoenzyme is formed, which can initiate transcription.

It carries out the reaction RNA(n) + a ribonucleoside 5'-triphosphate = RNA(n+1) + diphosphate. Functionally, DNA-dependent RNA polymerase catalyzes the transcription of DNA into RNA using the four ribonucleoside triphosphates as substrates. This chain is DNA-directed RNA polymerase subunit beta, found in Renibacterium salmoninarum (strain ATCC 33209 / DSM 20767 / JCM 11484 / NBRC 15589 / NCIMB 2235).